Here is a 292-residue protein sequence, read N- to C-terminus: Golgi to ER traffic protein 2 (292 aa).

Positions 1–18 (MSELSAEEKRKLLRERRQ) are enriched in basic and acidic residues. The interval 1-80 (MSELSAEEKR…TPLHDDPEVP (80 aa)) is disordered. Over 1 to 158 (MSELSAEEKR…SQYHAYEQKQ (158 aa)) the chain is Cytoplasmic. 2 stretches are compositionally biased toward polar residues: residues 29-47 (RLNNILSQGSSVKSSNVTS) and 55-71 (ATTTVMDLPSRETQSPT). A helical transmembrane segment spans residues 159 to 179 (WKARFLVVRWIIHTLNFVYHY). The Lumenal segment spans residues 180–205 (IASGYKLSASPYAFVRAQAVDSHVRT). A helical membrane pass occupies residues 206–225 (FFTAFLTVEVAVISAYFLVM). The Cytoplasmic portion of the chain corresponds to 226–268 (SQPKFKDFSRENLVSRILSMASAVVPAVGRYQPLVTRALVYWN). The chain crosses the membrane as a helical span at residues 269–289 (GASIFVGDLMLMVFYFGITSV). At 290–292 (LGN) the chain is on the lumenal side.

The protein belongs to the GET2 family. Component of the Golgi to ER traffic (GET) complex, which is composed of GET1, GET2 and GET3. Within the complex, GET1 and GET2 form a heterotetramer which is stabilized by phosphatidylinositol binding and which binds to the GET3 homodimer.

Its subcellular location is the endoplasmic reticulum membrane. It is found in the golgi apparatus membrane. Its function is as follows. Required for the post-translational delivery of tail-anchored (TA) proteins to the endoplasmic reticulum. Together with GET1, acts as a membrane receptor for soluble GET3, which recognizes and selectively binds the transmembrane domain of TA proteins in the cytosol. The GET complex cooperates with the HDEL receptor ERD2 to mediate the ATP-dependent retrieval of resident ER proteins that contain a C-terminal H-D-E-L retention signal from the Golgi to the ER. In Clavispora lusitaniae (strain ATCC 42720) (Yeast), this protein is Golgi to ER traffic protein 2.